A 236-amino-acid chain; its full sequence is Exotoxin type H (236 aa).

The N-terminal stretch at 1-32 is a signal peptide; sequence MRYNCRYSHIDKKIYSMIICLSFLLYSNVVQA.

Belongs to the staphylococcal/streptococcal toxin family.

Its subcellular location is the secreted. Functionally, mitogenic for human peripheral blood lymphocytes. In Streptococcus pyogenes serotype M1, this protein is Exotoxin type H (speH).